The primary structure comprises 107 residues: U1-lycotoxin-Ls1f (107 aa).

The first 20 residues, 1 to 20 (MMKVLVVVALLVTLISYSSS), serve as a signal peptide directing secretion. The propeptide occupies 21–41 (EGIDDLEADELLSLMANEQTR). 4 cysteine pairs are disulfide-bonded: C44/C59, C51/C68, C58/C86, and C70/C84.

Belongs to the neurotoxin 19 (CSTX) family. 04 (U1-Lctx) subfamily. In terms of tissue distribution, expressed by the venom gland.

The protein resides in the secreted. The chain is U1-lycotoxin-Ls1f from Lycosa singoriensis (Wolf spider).